The chain runs to 149 residues: Large ribosomal subunit protein uL15 (149 aa).

Residues 1–53 (MRLHTLQPAPGAKSTRKRVGRGTSSGHGKTSGFGHKGQKARSGRVGKRGFEGG) are disordered. Over residues 23–35 (TSSGHGKTSGFGH) the composition is skewed to gly residues. Over residues 36-47 (KGQKARSGRVGK) the composition is skewed to basic residues.

It belongs to the universal ribosomal protein uL15 family. As to quaternary structure, part of the 50S ribosomal subunit.

Binds to the 23S rRNA. The polypeptide is Large ribosomal subunit protein uL15 (Coprothermobacter proteolyticus (strain ATCC 35245 / DSM 5265 / OCM 4 / BT)).